A 244-amino-acid polypeptide reads, in one-letter code: LNDHLSFNFDKFVPNQNNILFQGEASVSTTGVLQVTKVSKPATRSIGRALYAAPVHIWDSTTGRVASFETSFSFVVKDEPEKSNGVDGLTFFLAPANSQIPSGSSAGLFGLFNSSDNKSSNQIIAVEFDTYFGKTYNPWDPDFKHIGVDVNSIKSIKTVKWDWRNGEVANVVITYRAPTKSLTVSLSYPSDQTSNIVTASVDLKAILPEWVSVGFSAGVGNAAEFETHDVLSWYFTSNLEANPA.

Residues asparagine 113 and asparagine 117 are each glycosylated (N-linked (GlcNAc...) asparagine). Mn(2+) is bound by residues glutamate 127 and aspartate 129. Ca(2+) is bound by residues aspartate 129, tyrosine 131, asparagine 137, and aspartate 142. Mn(2+) is bound by residues aspartate 142 and histidine 145.

The protein belongs to the leguminous lectin family. As to quaternary structure, homotetramer.

In terms of biological role, di-N-acetylchitobiose-binding anti-H(O) lectin. The protein is Anti-H(O) lectin 1 of Cytisophyllum sessilifolium (Sessile-leaved cytisus).